The primary structure comprises 328 residues: Beta-ketoacyl-[acyl-carrier-protein] synthase III (328 aa).

Residues cysteine 122 and histidine 255 contribute to the active site. The tract at residues 256 to 260 (QANIR) is ACP-binding. The active site involves asparagine 285.

Belongs to the thiolase-like superfamily. FabH family. In terms of assembly, homodimer.

It is found in the cytoplasm. The catalysed reaction is malonyl-[ACP] + acetyl-CoA + H(+) = 3-oxobutanoyl-[ACP] + CO2 + CoA. Its pathway is lipid metabolism; fatty acid biosynthesis. Functionally, catalyzes the condensation reaction of fatty acid synthesis by the addition to an acyl acceptor of two carbons from malonyl-ACP. Catalyzes the first condensation reaction which initiates fatty acid synthesis and may therefore play a role in governing the total rate of fatty acid production. Possesses both acetoacetyl-ACP synthase and acetyl transacylase activities. Its substrate specificity determines the biosynthesis of branched-chain and/or straight-chain of fatty acids. In Herminiimonas arsenicoxydans, this protein is Beta-ketoacyl-[acyl-carrier-protein] synthase III.